Reading from the N-terminus, the 540-residue chain is Acetyl-coenzyme A carboxylase carboxyl transferase subunit beta, chloroplastic (540 aa).

The disordered stretch occupies residues Tyr-229–Tyr-249. Positions Gly-233–Ser-248 are enriched in low complexity. Residues Leu-267–Val-538 enclose the CoA carboxyltransferase N-terminal domain. Zn(2+) contacts are provided by Cys-271, Cys-274, Cys-290, and Cys-293. The C4-type zinc-finger motif lies at Cys-271–Cys-293.

It belongs to the AccD/PCCB family. Acetyl-CoA carboxylase is a heterohexamer composed of biotin carboxyl carrier protein, biotin carboxylase and 2 subunits each of ACCase subunit alpha and ACCase plastid-coded subunit beta (accD). Zn(2+) serves as cofactor.

It localises to the plastid. Its subcellular location is the chloroplast stroma. The catalysed reaction is N(6)-carboxybiotinyl-L-lysyl-[protein] + acetyl-CoA = N(6)-biotinyl-L-lysyl-[protein] + malonyl-CoA. It functions in the pathway lipid metabolism; malonyl-CoA biosynthesis; malonyl-CoA from acetyl-CoA: step 1/1. Component of the acetyl coenzyme A carboxylase (ACC) complex. Biotin carboxylase (BC) catalyzes the carboxylation of biotin on its carrier protein (BCCP) and then the CO(2) group is transferred by the transcarboxylase to acetyl-CoA to form malonyl-CoA. The sequence is that of Acetyl-coenzyme A carboxylase carboxyl transferase subunit beta, chloroplastic from Amborella trichopoda.